The sequence spans 97 residues: MGSRFFLALFLVLLVLGNEVQGTQEDDPSSPALLDTMQESFFSYWSSARAAAEGLYQKTYLTSVDEKLRDMYSKSSAAMSTYAGIFTDQLLTLLKGE.

Residues 1–22 form the signal peptide; sequence MGSRFFLALFLVLLVLGNEVQG. The interval 63–71 is lipid binding; that stretch reads SVDEKLRDM. The lipoprotein lipase cofactor stretch occupies residues 75–97; the sequence is SSAAMSTYAGIFTDQLLTLLKGE.

Belongs to the apolipoprotein C2 family. In terms of processing, proapolipoprotein C-II is synthesized as a sialic acid containing glycoprotein which is subsequently desialylated prior to its proteolytic processing. Proapolipoprotein C-II, the major form found in plasma undergoes proteolytic cleavage of its N-terminal hexapeptide to generate the mature form apolipoprotein C-II, which occurs as the minor form in plasma.

Its subcellular location is the secreted. Functionally, component of chylomicrons, very low-density lipoproteins (VLDL), low-density lipoproteins (LDL), and high-density lipoproteins (HDL) in plasma. Plays an important role in lipoprotein metabolism as an activator of lipoprotein lipase. The sequence is that of Apolipoprotein C-II (Apoc2) from Grammomys surdaster (African woodland thicket rat).